Here is a 297-residue protein sequence, read N- to C-terminus: Tyrosine recombinase XerD (297 aa).

Residues 1–86 (MNDLIDDFLH…SLRSFFHYLM (86 aa)) form the Core-binding (CB) domain. Residues 107-291 (SLPKVLNLDD…TKLRLKDVYK (185 aa)) form the Tyr recombinase domain. Catalysis depends on residues Arg147, Lys171, His243, Arg246, and His269. Tyr278 (O-(3'-phospho-DNA)-tyrosine intermediate) is an active-site residue.

This sequence belongs to the 'phage' integrase family. XerD subfamily. As to quaternary structure, forms a cyclic heterotetrameric complex composed of two molecules of XerC and two molecules of XerD.

Its subcellular location is the cytoplasm. In terms of biological role, site-specific tyrosine recombinase, which acts by catalyzing the cutting and rejoining of the recombining DNA molecules. The XerC-XerD complex is essential to convert dimers of the bacterial chromosome into monomers to permit their segregation at cell division. It also contributes to the segregational stability of plasmids. This chain is Tyrosine recombinase XerD, found in Listeria innocua serovar 6a (strain ATCC BAA-680 / CLIP 11262).